The sequence spans 427 residues: Serine--tRNA ligase (427 aa).

Residue 235–237 (TSE) coordinates L-serine. ATP is bound at residue 266 to 268 (RSE). An L-serine-binding site is contributed by glutamate 289. Residue 353-356 (EISS) participates in ATP binding. Serine 388 contributes to the L-serine binding site.

It belongs to the class-II aminoacyl-tRNA synthetase family. Type-1 seryl-tRNA synthetase subfamily. Homodimer. The tRNA molecule binds across the dimer.

It is found in the cytoplasm. It carries out the reaction tRNA(Ser) + L-serine + ATP = L-seryl-tRNA(Ser) + AMP + diphosphate + H(+). The catalysed reaction is tRNA(Sec) + L-serine + ATP = L-seryl-tRNA(Sec) + AMP + diphosphate + H(+). It functions in the pathway aminoacyl-tRNA biosynthesis; selenocysteinyl-tRNA(Sec) biosynthesis; L-seryl-tRNA(Sec) from L-serine and tRNA(Sec): step 1/1. In terms of biological role, catalyzes the attachment of serine to tRNA(Ser). Is also able to aminoacylate tRNA(Sec) with serine, to form the misacylated tRNA L-seryl-tRNA(Sec), which will be further converted into selenocysteinyl-tRNA(Sec). The sequence is that of Serine--tRNA ligase from Chromobacterium violaceum (strain ATCC 12472 / DSM 30191 / JCM 1249 / CCUG 213 / NBRC 12614 / NCIMB 9131 / NCTC 9757 / MK).